The sequence spans 967 residues: LRR receptor-like serine/threonine-protein kinase ERL2 (967 aa).

An N-terminal signal peptide occupies residues 1–27 (MRRIETMKGLFFCLGMVVFMLLGSVSP). The Extracellular portion of the chain corresponds to 28 to 585 (MNNEGKALMA…SLPKSQVFTR (558 aa)). Residues Asn-70 and Asn-79 are each glycosylated (N-linked (GlcNAc...) asparagine). LRR repeat units follow at residues 74–97 (NVVS…GDLM), 98–120 (NLQS…IGNC), 122–145 (SLAY…SKLK), 146–166 (QLEF…ATLT), 170–192 (NLKT…LYWN), 194–216 (VLQY…MCQL), 218–240 (GLWY…IGNC), 242–261 (SFEI…PYNI), 265–287 (QVAT…IGLM), 289–311 (ALAV…LGNL), 313–335 (FTGK…LGNM), 337–359 (RLSY…LGKL), 361–382 (QLFE…NISS), 385–406 (ALNQ…EFRN), 409–431 (SLTY…LGHI), 433–456 (NLDT…GDLE), 457–479 (HLLI…FGNL), 481–503 (SIQI…LGQL), 505–527 (NINS…LTNC), and 529–550 (SLAN…MKNF). Residues Asn-228 and Asn-239 are each glycosylated (N-linked (GlcNAc...) asparagine). Asn-310 and Asn-334 each carry an N-linked (GlcNAc...) asparagine glycan. Asn-379 is a glycosylation site (N-linked (GlcNAc...) asparagine). Residues Asn-414, Asn-443, Asn-462, and Asn-469 are each glycosylated (N-linked (GlcNAc...) asparagine). Asn-534, Asn-539, and Asn-549 each carry an N-linked (GlcNAc...) asparagine glycan. Residues 586 to 606 (VAVICMVLGFITLICMIFIAV) traverse the membrane as a helical segment. Over 607 to 967 (YKSKQQKPVL…FREDISKSSL (361 aa)) the chain is Cytoplasmic. A phosphothreonine mark is found at Thr-640 and Thr-648. The 271-residue stretch at 651-921 (LDEKYIIGYG…EVSRVLLSLV (271 aa)) folds into the Protein kinase domain. ATP contacts are provided by residues 657–665 (IGYGASSTV) and Lys-679. Tyr-724 and Tyr-763 each carry phosphotyrosine. Catalysis depends on Asp-776, which acts as the Proton acceptor. Tyr-818 is modified (phosphotyrosine). At Thr-826 the chain carries Phosphothreonine. The tract at residues 921-955 (VPSPPPKKLPSPAKVQEGEERRESHSSDTTTPQWF) is disordered. The segment covering 936–946 (QEGEERRESHS) has biased composition (basic and acidic residues).

It belongs to the protein kinase superfamily. Ser/Thr protein kinase family. As to expression, mostly expressed in developing organs, including bud clusters, flowers, siliques and young rosettes. Also detected in mature aboveground organs, such as leaves, stems and pedicels, but barely in roots.

The protein resides in the membrane. It carries out the reaction L-seryl-[protein] + ATP = O-phospho-L-seryl-[protein] + ADP + H(+). The enzyme catalyses L-threonyl-[protein] + ATP = O-phospho-L-threonyl-[protein] + ADP + H(+). In terms of biological role, receptor kinase that regulates inflorescence architecture and organ shape as well as stomatal patterning, including density and clustering, together with ERL1 and ER. The chain is LRR receptor-like serine/threonine-protein kinase ERL2 (ERL2) from Arabidopsis thaliana (Mouse-ear cress).